Reading from the N-terminus, the 99-residue chain is Small ribosomal subunit protein bS20 (99 aa).

Residues 1 to 20 (MASAKPKKKNPRLASGRKRV) are compositionally biased toward basic residues. The interval 1–21 (MASAKPKKKNPRLASGRKRVR) is disordered.

This sequence belongs to the bacterial ribosomal protein bS20 family.

Its function is as follows. Binds directly to 16S ribosomal RNA. This Verminephrobacter eiseniae (strain EF01-2) protein is Small ribosomal subunit protein bS20.